The sequence spans 377 residues: uncharacterized protein (377 aa).

32 to 39 (GPINSGKT) serves as a coordination point for ATP.

The protein belongs to the archaeal ATPase family.

This is an uncharacterized protein from Methanocaldococcus jannaschii (strain ATCC 43067 / DSM 2661 / JAL-1 / JCM 10045 / NBRC 100440) (Methanococcus jannaschii).